The sequence spans 300 residues: GTPase Era (300 aa).

The region spanning 6–173 (KSGFVAIVGR…MDVLVEQMPE (168 aa)) is the Era-type G domain. Positions 14 to 21 (GRPNVGKS) are G1. 14–21 (GRPNVGKS) contacts GTP. Residues 40-44 (QTTRN) form a G2 region. Residues 61 to 64 (DTPG) form a G3 region. GTP contacts are provided by residues 61–65 (DTPGI) and 123–126 (NKID). Positions 123-126 (NKID) are G4. The tract at residues 152-154 (ISA) is G5. The region spanning 204–281 (TRDEIPHSVA…YLELWVKVQK (78 aa)) is the KH type-2 domain.

The protein belongs to the TRAFAC class TrmE-Era-EngA-EngB-Septin-like GTPase superfamily. Era GTPase family. As to quaternary structure, monomer.

The protein localises to the cytoplasm. It localises to the cell membrane. An essential GTPase that binds both GDP and GTP, with rapid nucleotide exchange. Plays a role in 16S rRNA processing and 30S ribosomal subunit biogenesis and possibly also in cell cycle regulation and energy metabolism. The chain is GTPase Era from Enterococcus faecalis (strain ATCC 700802 / V583).